Consider the following 96-residue polypeptide: GTPase HRas (96 aa).

M1 carries the post-translational modification N-acetylmethionine. T2 is subject to N-acetylthreonine; in GTPase HRas, N-terminally processed. Position 10-17 (G10–S17) interacts with GTP. The Effector region motif lies at Y32–Y40. D57 to Q61 contacts GTP.

The protein belongs to the small GTPase superfamily. Ras family. In its GTP-bound form interacts with PLCE1. Interacts with TBC1D10C. Interacts with RGL3. Interacts with HSPD1. Found in a complex with at least BRAF, HRAS, MAP2K1, MAPK3 and RGS14. Interacts (active GTP-bound form) with RGS14 (via RBD 1 domain). Forms a signaling complex with RASGRP1 and DGKZ. Interacts with RASSF5. Interacts with PDE6D. Interacts with IKZF3. Interacts with RACK1. Interacts with PIK3CG; the interaction is required for membrane recruitment and beta-gamma G protein dimer-dependent activation of the PI3K gamma complex PIK3CG:PIK3R6. Interacts with RAPGEF2. Interacts (active GTP-bound form) with both SHOC2 and PP1c (all isoforms) to form a tertiary complex; SHOC2 and PP1c preferably bind M-Ras/MRAS, but they also bind K-Ras/KRAS, N-Ras/NRAS and H-Ras/HRAS. Interacts (in GTP-bound form) with Oog1. Interacts (GTP-bound form) with MAPKAP1/SIN1; inhibiting H-Ras/HRAS activity. In terms of processing, ubiquitinated by the BCR(LZTR1) E3 ubiquitin ligase complex at Lys-170 in a non-degradative manner, leading to inhibit Ras signaling by decreasing Ras association with membranes.

It is found in the cell membrane. The protein localises to the golgi apparatus. Its subcellular location is the golgi apparatus membrane. The enzyme catalyses GTP + H2O = GDP + phosphate + H(+). Alternates between an inactive form bound to GDP and an active form bound to GTP. Activated by a guanine nucleotide-exchange factor (GEF) and inactivated by a GTPase-activating protein (GAP). Its function is as follows. Ras proteins bind GDP/GTP and possess intrinsic GTPase activity. The chain is GTPase HRas (HRAS) from Mesocricetus auratus (Golden hamster).